The chain runs to 368 residues: MFEENNSPTTDNSLWTLQGRQRASPAQRLHNLTSAGSSTSSSGLPLPQNIFTNPAIQPSSVINLNHSTDVVIGPMTQYQGPVSIYYMDYMEAHAMQTAAGINSNNANGNGNANRSRDKSPSRRVTRNTILLITLILLVLATGLIVLYVELNRPKPELPSNKAIYFGNNYDHQTFPNLGNGHLVVDREQWGASKNSHGLTIPLKRPIPYVLITHIGVQSLPCDNIYKCSIKMRTIQDSAIAEKGLPDIQSNFYVSEEGNIYVGRGWDWANTYANQTLAITFMGDYGRFKPGPKQLEGVQFLLAHAVANRNIDVDYKLVAQNQTKVTRSPGAYVYQEIRNWPHFYGCGMDEAPACGIELGMKTESWDAKQ.

Residues 1–127 (MFEENNSPTT…KSPSRRVTRN (127 aa)) lie on the Cytoplasmic side of the membrane. Disordered regions lie at residues 21 to 46 (QRAS…GLPL) and 101 to 122 (INSN…SPSR). Low complexity-rich tracts occupy residues 33–43 (TSAGSSTSSSG) and 102–113 (NSNNANGNGNAN). Residues 128 to 148 (TILLITLILLVLATGLIVLYV) form a helical membrane-spanning segment. Residues 149-368 (ELNRPKPELP…MKTESWDAKQ (220 aa)) lie on the Extracellular side of the membrane. The cysteines at positions 221 and 227 are disulfide-linked. The N-acetylmuramoyl-L-alanine amidase domain maps to 233–320 (TIQDSAIAEK…DVDYKLVAQN (88 aa)). N273 and N320 each carry an N-linked (GlcNAc...) asparagine glycan.

Belongs to the N-acetylmuramoyl-L-alanine amidase 2 family. In terms of tissue distribution, expressed in uninduced hemocytes and mbn-2 cells.

Its subcellular location is the cell membrane. Functionally, peptidoglycan-recognition protein probably involved in innate immunity by binding to peptidoglycans (PGN) of bacteria and activating the immune response. The polypeptide is Peptidoglycan-recognition protein LA (PGRP-LA) (Drosophila melanogaster (Fruit fly)).